Reading from the N-terminus, the 62-residue chain is Large ribosomal subunit protein bL28 (62 aa).

The tract at residues 1 to 26 (MARKCYVTGKSPKSGNNRSHALNKTK) is disordered. Polar residues predominate over residues 11-20 (SPKSGNNRSH).

The protein belongs to the bacterial ribosomal protein bL28 family.

The polypeptide is Large ribosomal subunit protein bL28 (Exiguobacterium sibiricum (strain DSM 17290 / CCUG 55495 / CIP 109462 / JCM 13490 / 255-15)).